A 61-amino-acid chain; its full sequence is Metallothionein-1A (61 aa).

An N-acetylmethionine modification is found at Met-1. A beta region spans residues 1-29 (MDPNCSCPTGGSCSCAGSCTCKACRCPSC). A divalent metal cation is bound by residues Cys-5, Cys-7, Cys-13, Cys-15, Cys-19, Cys-21, Cys-24, Cys-26, Cys-29, Cys-33, Cys-34, Cys-36, Cys-37, Cys-41, Cys-44, Cys-48, Cys-50, and Cys-57. Residues 30–61 (KKSCCSCCPVGCAKCAQGCVCKGASDKCSCCA) form an alpha region. At Ser-58 the chain carries Phosphoserine. 2 residues coordinate a divalent metal cation: Cys-59 and Cys-60.

Belongs to the metallothionein superfamily. Type 1 family. As to quaternary structure, monomer.

Functionally, metallothioneins have a high content of cysteine residues that bind various heavy metals; these proteins are transcriptionally regulated by both heavy metals and glucocorticoids. This Bos taurus (Bovine) protein is Metallothionein-1A (MT1A).